Consider the following 454-residue polypeptide: Probable ECA polymerase (454 aa).

The next 11 membrane-spanning stretches (helical) occupy residues 3 to 23 (LGQF…ILTL), 39 to 59 (FSML…MLVF), 61 to 81 (FGVA…ATAF), 119 to 139 (LALV…FLLF), 154 to 174 (GVAL…VYFL), 180 to 200 (AWFF…VIVG), 201 to 221 (GTRA…IVRG), 222 to 242 (WITL…MFWL), 340 to 360 (LVVM…GLII), 377 to 397 (YKAA…IVLA), and 409 to 429 (VFFC…YWLF).

This sequence belongs to the WzyE family. In terms of assembly, probably part of a complex composed of WzxE, WzyE and WzzE.

It localises to the cell inner membrane. Its pathway is bacterial outer membrane biogenesis; enterobacterial common antigen biosynthesis. Probably involved in the polymerization of enterobacterial common antigen (ECA) trisaccharide repeat units. The sequence is that of Probable ECA polymerase from Yersinia pestis bv. Antiqua (strain Angola).